The primary structure comprises 340 residues: Tetrathionate reductase subunit C (340 aa).

The next 9 membrane-spanning stretches (helical) occupy residues 19–39 (WLPW…AALF), 57–77 (ALLI…ADLH), 94–114 (WMPW…LWFL), 128–148 (VTKW…IYTG), 164–184 (AFPV…MIVA), 195–215 (ILWG…MWVS), 236–256 (YYAV…SLAL), 266–286 (VLLV…LLIQ), and 306–326 (TDGW…LIII).

It belongs to the NrfD family. In terms of assembly, probably composed of three subunits: TtrA, TtrB and TtrC.

It localises to the cell inner membrane. Part of a membrane-bound tetrathionate reductase that catalyzes the reduction of tetrathionate to thiosulfate. TtrC probably anchors TtrA and TtrB to the periplasmic face of the cytoplasmic membrane. May transfer electrons from membrane quinol to TtrB. During mice infection, the ability to use tetrathionate as an electron acceptor is a growth advantage for S.typhimurium over the competing microbiota in the lumen of the inflamed gut. This chain is Tetrathionate reductase subunit C (ttrC), found in Salmonella typhimurium (strain LT2 / SGSC1412 / ATCC 700720).